Reading from the N-terminus, the 731-residue chain is Cucumisin (731 aa).

Positions 1–22 (MSSSLIFKLFFFSLFFSNRLAS) are cleaved as a signal peptide. Positions 23-110 (RLDSDDDGKN…VFLNEMNELH (88 aa)) are cleaved as a propeptide — activation peptide. Residues 34–110 (YIVYMGRKLE…VFLNEMNELH (77 aa)) enclose the Inhibitor I9 domain. The Peptidase S8 domain occupies 114 to 584 (SWDFLGFPLT…SGHVNPLKAV (471 aa)). D140 acts as the Charge relay system in catalysis. A disulfide bridge links C166 with C174. Catalysis depends on H204, which acts as the Charge relay system. Intrachain disulfides connect C245/C250 and C380/C397. N466 carries an N-linked (GlcNAc...) asparagine glycan. The active-site Charge relay system is S525. Residues 616–731 (GDYSACTSGN…RSPITITSLV (116 aa)) constitute a propeptide that is removed on maturation. N652 carries N-linked (GlcNAc...) asparagine glycosylation.

The protein belongs to the peptidase S8 family. In terms of assembly, monomer and dimer. Post-translationally, the C-terminal propeptide is autocleaved. Specifically expressed in fruits. Expressed in sarcocarp (at protein level).

It is found in the secreted. It carries out the reaction Hydrolysis of proteins with broad specificity.. In Cucumis melo (Muskmelon), this protein is Cucumisin.